The sequence spans 101 residues: Urease subunit beta (101 aa).

The protein belongs to the urease beta subunit family. In terms of assembly, heterotrimer of UreA (gamma), UreB (beta) and UreC (alpha) subunits. Three heterotrimers associate to form the active enzyme.

Its subcellular location is the cytoplasm. The catalysed reaction is urea + 2 H2O + H(+) = hydrogencarbonate + 2 NH4(+). It participates in nitrogen metabolism; urea degradation; CO(2) and NH(3) from urea (urease route): step 1/1. In Nostoc punctiforme (strain ATCC 29133 / PCC 73102), this protein is Urease subunit beta.